The following is a 1217-amino-acid chain: Genetic suppressor element 1 (1217 aa).

A disordered region spans residues 1–155 (MKGMSHEPKS…SRSSSGGRER (155 aa)). Ser10 carries the post-translational modification Phosphoserine. The segment covering 15 to 33 (MLSTATRTTATVNPLTPSP) has biased composition (polar residues). Low complexity-rich tracts occupy residues 43 to 63 (SPATSSALSAQAAPSSSFAAA) and 76 to 89 (GSSLSSESSPVSSP). Residues Ser84 and Ser95 each carry the phosphoserine modification. Residues 103–114 (VPMGPIIVPPGG) are compositionally biased toward low complexity. The residue at position 305 (Arg305) is an Asymmetric dimethylarginine. Positions 321-403 (ERMSGLSAER…REKELLAAKA (83 aa)) form a coiled coil. Disordered regions lie at residues 324–385 (SGLS…EREL) and 418–465 (RGHA…HHTV). The segment covering 331–385 (LQMDEELRREREREREREREREADREREKEREREREKEREQEKEREREKEREREL) has biased composition (basic and acidic residues). Position 433 is a phosphothreonine (Thr433). Low complexity predominate over residues 450–465 (PVQHPLHPVPTPHHTV). Lys496 is modified (N6-acetyllysine). Disordered stretches follow at residues 526–579 (HLDM…QLHA), 633–675 (KAEE…GPFL), and 699–720 (FGELSGPLKPGSPYRPPVPRAP). Basic and acidic residues-rich tracts occupy residues 551-561 (NRHEPGGRDPP) and 633-645 (KAEEGPRKREPAP). Residues 711-720 (PYRPPVPRAP) show a composition bias toward pro residues. Position 739 is an N6-acetyllysine (Lys739). The residue at position 766 (Ser766) is a Phosphoserine. Disordered stretches follow at residues 807–858 (KEEL…NNSP), 903–930 (ADSLTNSPRDSPAVSLSEPATQQASLDV), 948–981 (EPGKLEQVRPQELSRVQELAPASGEKARLSEAPG), and 1068–1122 (LQSS…PKRK). Residues 813–822 (QKRRKRRRML) are compositionally biased toward basic residues. Phosphoserine occurs at positions 826 and 828. Polar residues-rich tracts occupy residues 831-840 (TIQSKRQTPS) and 847-858 (TRYSPDEMNNSP). The residue at position 857 (Ser857) is a Phosphoserine. Thr907 is modified (phosphothreonine). At Ser909 the chain carries Phosphoserine. Polar residues predominate over residues 1068 to 1085 (LQSSSRAPPPQHNGQQEP). The span at 1099–1117 (RDSEEEEEEDDEDGEDEEE) shows a compositional bias: acidic residues. Phosphoserine is present on Ser1101. Residues 1127–1201 (EAVFEAYQEH…ELDHLRKCLA (75 aa)) adopt a coiled-coil conformation.

As to quaternary structure, may be a component of a BHC histone deacetylase complex that contains HDAC1, HDAC2, HMG20B/BRAF35, KDM1A, RCOR1/CoREST, PHF21A/BHC80, ZMYM2, ZNF217, ZMYM3, GSE1 and GTF2I.

This Homo sapiens (Human) protein is Genetic suppressor element 1 (GSE1).